The sequence spans 100 residues: Glutamyl-tRNA(Gln) amidotransferase subunit C (100 aa).

The protein belongs to the GatC family. In terms of assembly, heterotrimer of A, B and C subunits.

It carries out the reaction L-glutamyl-tRNA(Gln) + L-glutamine + ATP + H2O = L-glutaminyl-tRNA(Gln) + L-glutamate + ADP + phosphate + H(+). The enzyme catalyses L-aspartyl-tRNA(Asn) + L-glutamine + ATP + H2O = L-asparaginyl-tRNA(Asn) + L-glutamate + ADP + phosphate + 2 H(+). Allows the formation of correctly charged Asn-tRNA(Asn) or Gln-tRNA(Gln) through the transamidation of misacylated Asp-tRNA(Asn) or Glu-tRNA(Gln) in organisms which lack either or both of asparaginyl-tRNA or glutaminyl-tRNA synthetases. The reaction takes place in the presence of glutamine and ATP through an activated phospho-Asp-tRNA(Asn) or phospho-Glu-tRNA(Gln). The sequence is that of Glutamyl-tRNA(Gln) amidotransferase subunit C from Streptococcus pyogenes serotype M1.